The following is an 884-amino-acid chain: Cadherin-1 (884 aa).

A signal peptide spans 1–23; sequence MGARCRSFSALLLLLQVSSWLCQ. A propeptide spanning residues 24-156 is cleaved from the precursor; sequence ELEPESCSPG…VYPGLRRQKR (133 aa). The segment at 119–139 is disordered; sequence KSMGHHHHRHHHRDPASESNP. The span at 121–131 shows a compositional bias: basic residues; that stretch reads MGHHHHRHHHR. Cadherin domains follow at residues 157–264, 265–377, 378–488, 489–595, and 596–699; these read DWVI…RPEF, TQEV…APVF, NPST…APIF, MPAE…DNAP, and IPEP…NCMK. Over 157-709 the chain is Extracellular; it reads DWVIPPISCP…AGIVAAGLQV (553 aa). Asp-259 lines the Ca(2+) pocket. O-linked (Man...) serine glycosylation is found at Ser-282 and Ser-287. Position 290 (Asp-290) interacts with Ca(2+). O-linked (Man...) threonine glycosylation is found at Thr-360, Thr-472, Thr-474, and Thr-511. Residue Asn-560 is glycosylated (N-linked (GlcNAc...) asparagine). Thr-578, Thr-580, and Thr-582 each carry an O-linked (Man...) threonine glycan. Asn-639 carries N-linked (GlcNAc...) asparagine glycosylation. Residues 710–733 traverse the membrane as a helical segment; sequence PAILGILGGILALLILILLLLLFL. The Cytoplasmic segment spans residues 734-884; the sequence is RRRTVVKEPL…ADMYGGGEDD (151 aa). Residues 749-808 are disordered; the sequence is DTRDNVYYYDEEGGGEEDQDFDLSQLHRGLDARPEVTRNDVAPTLMSVPQYRPRPANPDE. 3 positions are modified to phosphotyrosine; by SRC: Tyr-755, Tyr-756, and Tyr-757. The span at 757–769 shows a compositional bias: acidic residues; sequence YDEEGGGEEDQDF. A required for binding CTNND1 and PSEN1 region spans residues 760–771; the sequence is EGGGEEDQDFDL. Ser-772 is subject to Phosphoserine. The span at 776–786 shows a compositional bias: basic and acidic residues; the sequence is RGLDARPEVTR. Residues Ser-795, Ser-840, Ser-842, and Ser-848 each carry the phosphoserine modification. Residues 813–884 are required for binding alpha, beta and gamma catenins; it reads IDENLKAADS…ADMYGGGEDD (72 aa).

As to quaternary structure, homodimer; disulfide-linked. Component of an E-cadherin/ catenin adhesion complex composed of at least E-cadherin/CDH1, beta-catenin/CTNNB1 or gamma-catenin/JUP, and potentially alpha-catenin/CTNNA1; the complex is located to adherens junctions. Found in a complex composed of CDH1, RAP1A and PKP3; PKP3 acts as a scaffold protein within the complex, the complex is required for CDH1 localization to mature desmosome cell junctions. Interacts with the TRPV4 and CTNNB1 complex. Interacts with CTNND1. The stable association of CTNNA1 is controversial as CTNNA1 was shown not to bind to F-actin when assembled in the complex. Alternatively, the CTNNA1-containing complex may be linked to F-actin by other proteins such as LIMA1. Interaction with PSEN1, cleaves CDH1 resulting in the disassociation of cadherin-based adherens junctions (CAJs). Interacts with AJAP1 and DLGAP5. Interacts with TBC1D2. Interacts with LIMA1. Interacts with CAV1. Interacts with PIP5K1C. Interacts with RAB8B. Interacts with DDR1; this stabilizes CDH1 at the cell surface and inhibits its internalization. Interacts with RAPGEF2. Interacts with KLRG1. Forms a ternary complex composed of ADAM10, CADH1 and EPHA4; within the complex, CADH1 is cleaved by ADAM10 which disrupts adherens junctions. Interacts with SPEF1. Interacts with CTNNB1 and PKP2. Interacts with AMOTL2; the interaction may facilitate binding of radial actin fibers to cell junction complexes. Interacts with DSG3; the interaction is required for CDH1 localization to developing adherens junctions. Post-translationally, during apoptosis or with calcium influx, cleaved by a membrane-bound metalloproteinase (ADAM10), PS1/gamma-secretase and caspase-3. Processing by the metalloproteinase, induced by calcium influx, causes disruption of cell-cell adhesion and the subsequent release of beta-catenin into the cytoplasm. The residual membrane-tethered cleavage product is rapidly degraded via an intracellular proteolytic pathway. Cleavage by caspase-3 releases the cytoplasmic tail resulting in disintegration of the actin microfilament system. The gamma-secretase-mediated cleavage promotes disassembly of adherens junctions. During development of the cochlear organ of Corti, cleavage by ADAM10 at adherens junctions promotes pillar cell separation. In terms of processing, O-glycosylated. O-manosylated by TMTC1, TMTC2, TMTC3 or TMTC4. Ser-287 and Thr-511 are O-manosylated by TMTC2 or TMTC4 but not TMTC1 or TMTC3. N-glycosylation at Asn-639 is essential for expression, folding and trafficking. Addition of bisecting N-acetylglucosamine by MGAT3 modulates its cell membrane location. Post-translationally, ubiquitinated by a SCF complex containing SKP2, which requires prior phosphorylation by CK1/CSNK1A1. Ubiquitinated by CBLL1/HAKAI, requires prior phosphorylation at Tyr-756. As to expression, expressed in inner and outer pillar cells of the organ of Corti (at protein level). Expressed in granuloma macrophages (at protein level). Expressed in the epidermal keratinocytes of the skin from birth (at protein level). Expressed in non-neural epithelial tissues.

It is found in the cell junction. The protein resides in the adherens junction. It localises to the cell membrane. The protein localises to the endosome. Its subcellular location is the golgi apparatus. It is found in the trans-Golgi network. The protein resides in the cytoplasm. It localises to the desmosome. Cadherins are calcium-dependent cell adhesion proteins. They preferentially interact with themselves in a homophilic manner in connecting cells; cadherins may thus contribute to the sorting of heterogeneous cell types. CDH1 is involved in mechanisms regulating cell-cell adhesions, mobility and proliferation of epithelial cells. Promotes organization of radial actin fiber structure and cellular response to contractile forces, via its interaction with AMOTL2 which facilitates anchoring of radial actin fibers to CDH1 junction complexes at the cell membrane. Plays a role in the early stages of desmosome cell-cell junction formation via facilitating the recruitment of DSG2 and DSP to desmosome plaques. Has a potent invasive suppressor role. It is a ligand for integrin alpha-E/beta-7. Its function is as follows. E-Cad/CTF2 promotes non-amyloidogenic degradation of Abeta precursors. Has a strong inhibitory effect on APP C99 and C83 production. Functionally, (Microbial infection) Does not function as a receptor for L.monocytogenes internalin A (InlA); mutating a single surface-exposed residue confers receptor activity to this protein and promotes uptake of the bacteria. In Mus musculus (Mouse), this protein is Cadherin-1 (Cdh1).